The following is a 285-amino-acid chain: Protoheme IX farnesyltransferase (285 aa).

The next 8 helical transmembrane spans lie at 19–39 (RIIWLLDLAALSGAFLSGKLM), 40–60 (PLSILAVLVGGTFASAGSMII), 90–110 (AIYVGIALLTLGTLVGLLDNP), 111–131 (LTSFFILLGGLVYVLVYTVWL), 135–155 (SPLNIVIGGLAGSAAAWAGYA), 165–185 (SILLGLLIFMWTPGHFWALAL), 220–240 (IPFALALYLYAGVIYGIVAGI), and 265–285 (FKFSSPYLAILLILIILTRLI).

Belongs to the UbiA prenyltransferase family. Protoheme IX farnesyltransferase subfamily.

Its subcellular location is the cell membrane. The catalysed reaction is heme b + (2E,6E)-farnesyl diphosphate + H2O = Fe(II)-heme o + diphosphate. It functions in the pathway porphyrin-containing compound metabolism; heme O biosynthesis; heme O from protoheme: step 1/1. In terms of biological role, converts heme B (protoheme IX) to heme O by substitution of the vinyl group on carbon 2 of heme B porphyrin ring with a hydroxyethyl farnesyl side group. This is Protoheme IX farnesyltransferase from Metallosphaera sedula (strain ATCC 51363 / DSM 5348 / JCM 9185 / NBRC 15509 / TH2).